The following is a 291-amino-acid chain: Small ribosomal subunit biogenesis GTPase RsgA (291 aa).

In terms of domain architecture, CP-type G spans 63 to 221 (KNELKRPPVS…IADTPGFSAL (159 aa)). GTP is bound by residues 112-115 (TKKD) and 164-172 (GQSGVGKST). Residues cysteine 245, cysteine 250, histidine 252, and cysteine 258 each coordinate Zn(2+).

The protein belongs to the TRAFAC class YlqF/YawG GTPase family. RsgA subfamily. In terms of assembly, monomer. Associates with 30S ribosomal subunit, binds 16S rRNA. Zn(2+) serves as cofactor.

Its subcellular location is the cytoplasm. One of several proteins that assist in the late maturation steps of the functional core of the 30S ribosomal subunit. Helps release RbfA from mature subunits. May play a role in the assembly of ribosomal proteins into the subunit. Circularly permuted GTPase that catalyzes slow GTP hydrolysis, GTPase activity is stimulated by the 30S ribosomal subunit. The protein is Small ribosomal subunit biogenesis GTPase RsgA of Staphylococcus aureus (strain MRSA252).